A 324-amino-acid chain; its full sequence is Ribonucleoside-diphosphate reductase subunit beta nrdF2 (324 aa).

Fe cation-binding residues include E103 and H106. Residue Y110 is part of the active site. Positions 163, 197, and 200 each coordinate Fe cation.

Belongs to the ribonucleoside diphosphate reductase small chain family. In terms of assembly, tetramer of two alpha and two beta subunits. Requires Fe cation as cofactor.

It catalyses the reaction a 2'-deoxyribonucleoside 5'-diphosphate + [thioredoxin]-disulfide + H2O = a ribonucleoside 5'-diphosphate + [thioredoxin]-dithiol. Provides the precursors necessary for DNA synthesis. Catalyzes the biosynthesis of deoxyribonucleotides from the corresponding ribonucleotides. In Mycobacterium tuberculosis (strain CDC 1551 / Oshkosh), this protein is Ribonucleoside-diphosphate reductase subunit beta nrdF2 (nrdF2).